We begin with the raw amino-acid sequence, 254 residues long: Alcohol dehydrogenase (254 aa).

10–33 (FVAGLGGIGLDTSRELVKRDLKNL) contributes to the NAD(+) binding site. S138 is a substrate binding site. The active-site Proton acceptor is the Y151.

This sequence belongs to the short-chain dehydrogenases/reductases (SDR) family. In terms of assembly, homodimer.

It catalyses the reaction a primary alcohol + NAD(+) = an aldehyde + NADH + H(+). The enzyme catalyses a secondary alcohol + NAD(+) = a ketone + NADH + H(+). The chain is Alcohol dehydrogenase (Adh) from Drosophila guanche (Fruit fly).